The primary structure comprises 52 residues: Large ribosomal subunit protein bL32c (52 aa).

Belongs to the bacterial ribosomal protein bL32 family.

It is found in the plastid. It localises to the chloroplast. This is Large ribosomal subunit protein bL32c from Aethionema grandiflorum (Persian stone-cress).